Consider the following 103-residue polypeptide: Small ribosomal subunit protein uS10 (103 aa).

This sequence belongs to the universal ribosomal protein uS10 family. As to quaternary structure, part of the 30S ribosomal subunit.

Functionally, involved in the binding of tRNA to the ribosomes. The sequence is that of Small ribosomal subunit protein uS10 from Shewanella halifaxensis (strain HAW-EB4).